A 365-amino-acid polypeptide reads, in one-letter code: DNA replication and repair protein RecF (365 aa).

Position 30-37 (30-37 (GDNAQGKT)) interacts with ATP.

The protein belongs to the RecF family.

Its subcellular location is the cytoplasm. Functionally, the RecF protein is involved in DNA metabolism; it is required for DNA replication and normal SOS inducibility. RecF binds preferentially to single-stranded, linear DNA. It also seems to bind ATP. The chain is DNA replication and repair protein RecF from Alkaliphilus oremlandii (strain OhILAs) (Clostridium oremlandii (strain OhILAs)).